We begin with the raw amino-acid sequence, 250 residues long: Serine/arginine-rich splicing factor RS31A (250 aa).

2 consecutive RRM domains span residues 2–74 (RHVY…WAKD) and 95–166 (KTLF…YALR). The tract at residues 170–250 (EREDRYAGSR…SRSPIQRARG (81 aa)) is disordered. The span at 177 to 191 (GSRRRRSPSPVYRRR) shows a compositional bias: basic residues. S183, S185, S201, S218, and S243 each carry phosphoserine. Residues 192–230 (PSPDYTRRRSPEYDRYKGPAPYERRKSPDYGRRSSDYGR) show a composition bias toward basic and acidic residues.

This sequence belongs to the splicing factor SR family. RS subfamily. As to quaternary structure, component of the spliceosome. Interacts with MOS14.

It is found in the nucleus speckle. It localises to the nucleus. The protein localises to the nucleoplasm. Probably involved in intron recognition and spliceosome assembly. This is Serine/arginine-rich splicing factor RS31A (RS31A) from Arabidopsis thaliana (Mouse-ear cress).